The following is a 212-amino-acid chain: Amelotin (212 aa).

A signal peptide spans 1–16 (MKTVVLLLCLLGSAQS). 2 disordered regions span residues 23-42 (PALGAPATKPTPGQVTPLTQ) and 141-212 (PSGQ…NRTK). Polar residues-rich tracts occupy residues 33 to 42 (TPGQVTPLTQ) and 165 to 178 (PANQATTPGHTTPA).

The protein belongs to the amelotin family. In terms of processing, O-glycosylated. Phosphorylated by FAM20C in vitro. As to expression, highest expression in the mandible. Found in the basal lamina of maturation stage ameloblasts of incisors and unerupted molars. Also found in the internal basal lamina of junctional epithelium in molars.

The protein localises to the secreted. Functionally, is a promoter of calcium phosphate mineralization, playing a critical role in the formation of the compact, mineralized, aprismatic enamel surface layer during the maturation stage of amelogenesis. This Rattus norvegicus (Rat) protein is Amelotin.